Reading from the N-terminus, the 376-residue chain is Germination-specific cysteine protease 1 (376 aa).

The signal sequence occupies residues 1–22 (MAPSTKVLSLLLLYVVVSLASG). The propeptide at 23–144 (DESIINDHLQ…KYSAAVNGKE (122 aa)) is activation peptide. Asparagine 93 is a glycosylation site (N-linked (GlcNAc...) asparagine). Intrachain disulfides connect cysteine 166–cysteine 208, cysteine 200–cysteine 241, and cysteine 299–cysteine 351. Cysteine 169 is a catalytic residue. Active-site residues include histidine 305 and asparagine 325.

This sequence belongs to the peptidase C1 family.

In terms of biological role, probable thiol protease. In Arabidopsis thaliana (Mouse-ear cress), this protein is Germination-specific cysteine protease 1.